A 362-amino-acid polypeptide reads, in one-letter code: 3-dehydroquinate synthase (362 aa).

Residues 71 to 76 (DGEQYK), 105 to 109 (GVVGD), 129 to 130 (TT), Lys142, Lys151, and 169 to 172 (CLKT) contribute to the NAD(+) site. Residues Glu184, His247, and His264 each contribute to the Zn(2+) site.

Belongs to the sugar phosphate cyclases superfamily. Dehydroquinate synthase family. Co(2+) serves as cofactor. The cofactor is Zn(2+). Requires NAD(+) as cofactor.

The protein localises to the cytoplasm. It catalyses the reaction 7-phospho-2-dehydro-3-deoxy-D-arabino-heptonate = 3-dehydroquinate + phosphate. It participates in metabolic intermediate biosynthesis; chorismate biosynthesis; chorismate from D-erythrose 4-phosphate and phosphoenolpyruvate: step 2/7. In terms of biological role, catalyzes the conversion of 3-deoxy-D-arabino-heptulosonate 7-phosphate (DAHP) to dehydroquinate (DHQ). The protein is 3-dehydroquinate synthase of Escherichia coli (strain 55989 / EAEC).